Consider the following 347-residue polypeptide: S-adenosylmethionine:tRNA ribosyltransferase-isomerase (347 aa).

This sequence belongs to the QueA family. In terms of assembly, monomer.

The protein localises to the cytoplasm. The enzyme catalyses 7-aminomethyl-7-carbaguanosine(34) in tRNA + S-adenosyl-L-methionine = epoxyqueuosine(34) in tRNA + adenine + L-methionine + 2 H(+). The protein operates within tRNA modification; tRNA-queuosine biosynthesis. Functionally, transfers and isomerizes the ribose moiety from AdoMet to the 7-aminomethyl group of 7-deazaguanine (preQ1-tRNA) to give epoxyqueuosine (oQ-tRNA). The protein is S-adenosylmethionine:tRNA ribosyltransferase-isomerase of Bordetella parapertussis (strain 12822 / ATCC BAA-587 / NCTC 13253).